The chain runs to 453 residues: Gastrin/cholecystokinin type B receptor (453 aa).

At 1-57 (MDLLKLNRSLQGPGPGSGSSLCRPGVSLLNSSSAGNLSCETPRIRGTGTRELELTIR) the chain is on the extracellular side. Asn-7, Asn-30, and Asn-36 each carry an N-linked (GlcNAc...) asparagine glycan. Residues 58 to 79 (ITLYAVIFLMSVGGNVLIIVVL) traverse the membrane as a helical segment. Residues 80–87 (GLSRRLRT) lie on the Cytoplasmic side of the membrane. A helical transmembrane segment spans residues 88-109 (VTNAFLLSLAVSDLLLAVACMP). Topologically, residues 110–131 (FTLLPNLMGTFIFGTVICKAVS) are extracellular. Residues Cys-127 and Cys-205 are joined by a disulfide bond. The helical transmembrane segment at 132-150 (YLMGVSVSVSTLNLAAIAL) threads the bilayer. Residues 151 to 170 (ERYSAICRPLQARVWQTRSH) lie on the Cytoplasmic side of the membrane. Residues 171-189 (AARVILATWLLSGLLMVPY) traverse the membrane as a helical segment. Over 190 to 219 (PVYTVVQPVGPRILQCMHLWPSERVQQMWS) the chain is Extracellular. A helical transmembrane segment spans residues 220-242 (VLLLILLFFIPGVVMAVAYGLIS). The Cytoplasmic portion of the chain corresponds to 243–339 (RELYLGLRFD…KLLAKKRVVR (97 aa)). Residues 257 to 276 (SETQSRVRNQGGLPGGAAAP) are disordered. Residues 340 to 361 (MLLVIVLLFFVCWLPVYSANTW) form a helical membrane-spanning segment. The Extracellular portion of the chain corresponds to 362-379 (RAFDGPGARRALAGAPIS). The chain crosses the membrane as a helical span at residues 380 to 400 (FIHLLSYTSACANPLVYCFMH). Residues 401-453 (RRFRQACLDTCARCCPRPPRARPRPLPDEDPPTPSIASLSRLSYTTISTLGPG) lie on the Cytoplasmic side of the membrane. The S-palmitoyl cysteine moiety is linked to residue Cys-414.

This sequence belongs to the G-protein coupled receptor 1 family.

Its subcellular location is the cell membrane. Functionally, receptor for gastrin and cholecystokinin. The CCK-B receptors occur throughout the central nervous system where they modulate anxiety, analgesia, arousal, and neuroleptic activity. This receptor mediates its action by association with G proteins that activate a phosphatidylinositol-calcium second messenger system. The chain is Gastrin/cholecystokinin type B receptor (Cckbr) from Mus musculus (Mouse).